Reading from the N-terminus, the 84-residue chain is Putative movement protein (84 aa).

A helical membrane pass occupies residues 15 to 35 (ALHGILVAFIAVLCLIGCLWA).

In terms of assembly, interacts with the capsid protein (CP). Part of a MP-CP-viral DNA complex.

The protein resides in the host membrane. Functionally, involved in the viral transport within, and between cells. This chain is Putative movement protein, found in Miscanthus streak virus (isolate 91) (MiSV).